Reading from the N-terminus, the 218-residue chain is MDDDVLKRIGVLSKFITDEKKARIEKVLNLRTNYLTFVLEDIFQSQNASATIRTGEILGLSDVHVIEKKNKHTLNPDVTLGSSQWINLNKYKNAKFAIDRLKSDGYSIVATSLNPKSINLENLTINNKMAIFFGTELTGLSAEVLGAADLYVKIPMYGFTQSYNISVAVAIVMYSLLMRLRKSSIDYLLNEAEKSNLRLKYYRQVVKNYQFIENLINS.

Thr-111 and Ile-154 together coordinate S-adenosyl-L-methionine.

It belongs to the class IV-like SAM-binding methyltransferase superfamily. RNA methyltransferase TrmH family.

The enzyme catalyses guanosine(18) in tRNA + S-adenosyl-L-methionine = 2'-O-methylguanosine(18) in tRNA + S-adenosyl-L-homocysteine + H(+). Functionally, catalyzes the 2'-O methylation of guanosine at position 18 in tRNA. This chain is tRNA (guanosine(18)-2'-O)-methyltransferase, found in Borreliella burgdorferi (strain ATCC 35210 / DSM 4680 / CIP 102532 / B31) (Borrelia burgdorferi).